The following is a 793-amino-acid chain: E3 UFM1-protein ligase 1 (793 aa).

The interval 2–212 is required for E3 UFM1-protein ligase activity; sequence AADWEEIRRL…INNLLNLYGF (211 aa). Disordered regions lie at residues 405 to 472 and 745 to 793; these read ALLE…RNKL and GAEK…SVTE. Over residues 427 to 439 the composition is skewed to gly residues; it reads EGGGSVKSGGGGN. A compositionally biased stretch (basic and acidic residues) spans 767–781; that stretch reads SLQRELHSLSRDIKD.

It belongs to the UFL1 family. In terms of assembly, catalytic component of the UFM1 ribosome E3 ligase (UREL) complex. Interacts with E2-like enzyme UFC1.

It localises to the endoplasmic reticulum membrane. Its subcellular location is the cytoplasm. The protein localises to the cytosol. It is found in the nucleus. The protein resides in the chromosome. Functionally, E3 protein ligase that mediates ufmylation, the covalent attachment of the ubiquitin-like modifier UFM1 to lysine residues on target proteins, and which plays a key role in various processes, such as ribosome recycling, response to DNA damage, interferon response or reticulophagy (also called ER-phagy). As part of the UREL complex, plays a key role in ribosome recycling by catalyzing mono-ufmylation of RPL26/uL24 subunit of the 60S ribosome. Ufmylation of RPL26/uL24 occurs on free 60S ribosomes following ribosome dissociation: it weakens the junction between post-termination 60S subunits and SEC61 translocons, promoting release and recycling of the large ribosomal subunit from the endoplasmic reticulum membrane. Ufmylation of RPL26/uL24 and subsequent 60S ribosome recycling either take place after normal termination of translation or after ribosome stalling during cotranslational translocation at the endoplasmic reticulum. Involved in reticulophagy in response to endoplasmic reticulum stress by mediating ufmylation of proteins such as CYB5R3 and RPN1, thereby promoting lysosomal degradation of ufmylated proteins. Ufmylation in response to endoplasmic reticulum stress is essential for processes such as hematopoiesis, blood vessel morphogenesis or inflammatory response. The polypeptide is E3 UFM1-protein ligase 1 (Danio rerio (Zebrafish)).